The following is a 317-amino-acid chain: Sperm acrosome membrane-associated protein 6 (317 aa).

The first 18 residues, 1–18 (MFVFIAKLLIFSSVITSA), serve as a signal peptide directing secretion. The Extracellular segment spans residues 19–281 (FTCYQCFIDE…PSFSFWLPRP (263 aa)). Intrachain disulfides connect Cys-21–Cys-143, Cys-24–Cys-146, Cys-35–Cys-51, Cys-128–Cys-151, and Cys-132–Cys-157. A glycan (N-linked (GlcNAc...) asparagine) is linked at Asn-29. The Ig-like domain occupies 123 to 237 (PRVSGCLPPC…EVLSQEQSLV (115 aa)). N-linked (GlcNAc...) asparagine glycosylation occurs at Asn-168. Cys-174 and Cys-227 form a disulfide bridge. Residues 282–302 (ALLITCLTATMLLIFLSLGAM) form a helical membrane-spanning segment. Residues 303–317 (CRLWYQIRTNVSNPA) lie on the Cytoplasmic side of the membrane.

This sequence belongs to the SPACA6 family. In terms of assembly, forms a complex with izumo1 and tmem81 on spermatocyte cell membrane. The complex binds to oocyte protein bncr. In terms of tissue distribution, expressed in testis.

It is found in the cytoplasmic vesicle. The protein localises to the secretory vesicle. It localises to the acrosome membrane. Functionally, sperm protein required for fusion of sperm with the egg membrane during fertilization. May regulate the expression of sperm surface protein DCST2. The chain is Sperm acrosome membrane-associated protein 6 from Danio rerio (Zebrafish).